A 610-amino-acid polypeptide reads, in one-letter code: UvrABC system protein C (610 aa).

The region spanning 16-94 (SQPGVYRMYD…IKLYQPRYNV (79 aa)) is the GIY-YIG domain. Positions 204-239 (QQVLTQLISRMEEASRLLHFEDAARIRDQIQAVRRV) constitute a UVR domain.

The protein belongs to the UvrC family. As to quaternary structure, interacts with UvrB in an incision complex.

The protein resides in the cytoplasm. The UvrABC repair system catalyzes the recognition and processing of DNA lesions. UvrC both incises the 5' and 3' sides of the lesion. The N-terminal half is responsible for the 3' incision and the C-terminal half is responsible for the 5' incision. This chain is UvrABC system protein C, found in Yersinia enterocolitica serotype O:8 / biotype 1B (strain NCTC 13174 / 8081).